The sequence spans 426 residues: Tryptophan--tRNA ligase (426 aa).

Positions 66–74 (PSGEMHLGN) match the 'HIGH' region motif. The 'KMSKS' region signature appears at 314–318 (KMSSS).

The protein belongs to the class-I aminoacyl-tRNA synthetase family.

Its subcellular location is the cytoplasm. The catalysed reaction is tRNA(Trp) + L-tryptophan + ATP = L-tryptophyl-tRNA(Trp) + AMP + diphosphate + H(+). This chain is Tryptophan--tRNA ligase, found in Thermoplasma volcanium (strain ATCC 51530 / DSM 4299 / JCM 9571 / NBRC 15438 / GSS1).